A 256-amino-acid chain; its full sequence is Hydroxyacylglutathione hydrolase (256 aa).

H55, H57, D59, H60, H113, D132, and H170 together coordinate Zn(2+).

Belongs to the metallo-beta-lactamase superfamily. Glyoxalase II family. Monomer. Zn(2+) is required as a cofactor.

It catalyses the reaction an S-(2-hydroxyacyl)glutathione + H2O = a 2-hydroxy carboxylate + glutathione + H(+). The protein operates within secondary metabolite metabolism; methylglyoxal degradation; (R)-lactate from methylglyoxal: step 2/2. Functionally, thiolesterase that catalyzes the hydrolysis of S-D-lactoyl-glutathione to form glutathione and D-lactic acid. This Methylococcus capsulatus (strain ATCC 33009 / NCIMB 11132 / Bath) protein is Hydroxyacylglutathione hydrolase.